The sequence spans 608 residues: UvrABC system protein C (608 aa).

The GIY-YIG domain occupies 15–93 (HQPGVYRMYN…IKQYLPKYNV (79 aa)). The UVR domain maps to 203–238 (RQVIQSLVEQMEGASQALNFEKAATIRDQIQSMRRV).

This sequence belongs to the UvrC family. As to quaternary structure, interacts with UvrB in an incision complex.

The protein resides in the cytoplasm. In terms of biological role, the UvrABC repair system catalyzes the recognition and processing of DNA lesions. UvrC both incises the 5' and 3' sides of the lesion. The N-terminal half is responsible for the 3' incision and the C-terminal half is responsible for the 5' incision. This is UvrABC system protein C from Aliivibrio salmonicida (strain LFI1238) (Vibrio salmonicida (strain LFI1238)).